We begin with the raw amino-acid sequence, 103 residues long: MNQGNPPPYPGPGPTAPYPPYPSQPMGPGFYPPGPPGGPYPPPQGGYPYQGYPQYGWQGGPQEPPKTTVYVVEDQRRDDLGTSTCLTACWTALCCCCLWDMLT.

A compositionally biased stretch (pro residues) spans 1–45 (MNQGNPPPYPGPGPTAPYPPYPSQPMGPGFYPPGPPGGPYPPPQG). Residues 1 to 66 (MNQGNPPPYP…WQGGPQEPPK (66 aa)) are disordered. Positions 46-56 (GYPYQGYPQYG) are enriched in low complexity. The helical transmembrane segment at 80 to 97 (LGTSTCLTACWTALCCCC) threads the bilayer.

Belongs to the CYSTM1 family.

The protein resides in the membrane. In Bos taurus (Bovine), this protein is Cysteine-rich and transmembrane domain-containing protein 1 (CYSTM1).